Here is a 750-residue protein sequence, read N- to C-terminus: Photosystem I P700 chlorophyll a apoprotein A1 (750 aa).

The next 8 membrane-spanning stretches (helical) occupy residues 70-93, 156-179, 195-219, 291-309, 346-369, 385-411, 433-455, and 531-549; these read VFSA…FHGA, LYCT…FHYH, LNHH…HVSL, IAHH…GHMY, WHAQ…HHMY, LSLF…IFMV, AIIS…LYIH, and FLVH…LILL. The [4Fe-4S] cluster site is built by Cys573 and Cys582. 2 helical membrane-spanning segments follow: residues 589 to 610 and 664 to 686; these read HVFL…HFSW and LSAY…MFLF. Residue His675 participates in chlorophyll a' binding. Chlorophyll a-binding residues include Met683 and Tyr691. Position 692 (Trp692) interacts with phylloquinone. A helical membrane pass occupies residues 724-744; that stretch reads AVGVTHYLLGGIATTWAFFLA.

Belongs to the PsaA/PsaB family. As to quaternary structure, the PsaA/B heterodimer binds the P700 chlorophyll special pair and subsequent electron acceptors. PSI consists of a core antenna complex that captures photons, and an electron transfer chain that converts photonic excitation into a charge separation. The eukaryotic PSI reaction center is composed of at least 11 subunits. P700 is a chlorophyll a/chlorophyll a' dimer, A0 is one or more chlorophyll a, A1 is one or both phylloquinones and FX is a shared 4Fe-4S iron-sulfur center. is required as a cofactor.

The protein resides in the plastid. Its subcellular location is the chloroplast thylakoid membrane. It catalyses the reaction reduced [plastocyanin] + hnu + oxidized [2Fe-2S]-[ferredoxin] = oxidized [plastocyanin] + reduced [2Fe-2S]-[ferredoxin]. Functionally, psaA and PsaB bind P700, the primary electron donor of photosystem I (PSI), as well as the electron acceptors A0, A1 and FX. PSI is a plastocyanin-ferredoxin oxidoreductase, converting photonic excitation into a charge separation, which transfers an electron from the donor P700 chlorophyll pair to the spectroscopically characterized acceptors A0, A1, FX, FA and FB in turn. Oxidized P700 is reduced on the lumenal side of the thylakoid membrane by plastocyanin. This is Photosystem I P700 chlorophyll a apoprotein A1 from Aethionema grandiflorum (Persian stone-cress).